We begin with the raw amino-acid sequence, 94 residues long: MGFLSYFRSQKKRSASVAKERLQIIVARERSQTATGPDYLPMLKEELLDVIRKYVQVDRDAVNFQLDREGDCEVLELNITLPDQQDQAAAHDRG.

It belongs to the MinE family.

Prevents the cell division inhibition by proteins MinC and MinD at internal division sites while permitting inhibition at polar sites. This ensures cell division at the proper site by restricting the formation of a division septum at the midpoint of the long axis of the cell. The polypeptide is Cell division topological specificity factor (Alkalilimnicola ehrlichii (strain ATCC BAA-1101 / DSM 17681 / MLHE-1)).